Consider the following 77-residue polypeptide: Putative defensin-like protein 187 (77 aa).

Positions 1-19 (MKNSSIMFVLIVVFLISSS) are cleaved as a signal peptide. Cystine bridges form between Cys31/Cys77, Cys43/Cys71, and Cys47/Cys73.

This sequence belongs to the DEFL family.

Its subcellular location is the secreted. This chain is Putative defensin-like protein 187 (LCR42), found in Arabidopsis thaliana (Mouse-ear cress).